The primary structure comprises 127 residues: Holo-[acyl-carrier-protein] synthase (127 aa).

Aspartate 9 and glutamate 58 together coordinate Mg(2+).

It belongs to the P-Pant transferase superfamily. AcpS family. Requires Mg(2+) as cofactor.

The protein resides in the cytoplasm. It catalyses the reaction apo-[ACP] + CoA = holo-[ACP] + adenosine 3',5'-bisphosphate + H(+). Transfers the 4'-phosphopantetheine moiety from coenzyme A to a Ser of acyl-carrier-protein. The protein is Holo-[acyl-carrier-protein] synthase of Shewanella sp. (strain MR-4).